Here is a 461-residue protein sequence, read N- to C-terminus: Coronin-1A (461 aa).

An N-acetylserine modification is found at Ser-2. At Ser-2 the chain carries Phosphoserine; by PKC. WD repeat units lie at residues 13–63, 73–110, 123–160, 164–204, 207–251, 258–296, and 302–349; these read HVFG…LVLP, NVPL…MVWE, PVIT…LVWD, GAAV…RVIE, KGTV…ALWD, PLSL…RYFE, and PFLH…EPIA. Residues 403-418 are compositionally biased toward basic and acidic residues; sequence ELRVNRGLDSARRRAT. The tract at residues 403-434 is disordered; it reads ELRVNRGLDSARRRATPEPSGTPSSDTVSRLE. The residue at position 412 (Ser-412) is a Phosphoserine; by PKC. Thr-418 is subject to Phosphothreonine. Residues 421 to 430 are compositionally biased toward polar residues; it reads PSGTPSSDTV. Ser-422 is modified (phosphoserine). Positions 424–461 form a coiled coil; that stretch reads TPSSDTVSRLEEDVRNLNAIVQKLQERLDRLEETVQAK.

It belongs to the WD repeat coronin family. As to quaternary structure, binds actin. Post-translationally, phosphorylation at Ser-412 by PKC strongly down-regulates the association with actin. Polyubiquitinated by RNF128 with 'Lys-48'-linked chains, leading to proteasomal degradation. Expressed in spleen, lymph nodes, thymus, brain and at very lower levels in lung. Also expressed in cells of the lymphoid/myeloid lineage. Not expressed in Kuffper cells.

Its subcellular location is the cytoplasm. The protein resides in the cytoskeleton. It is found in the cell cortex. It localises to the cytoplasmic vesicle. The protein localises to the phagosome membrane. In terms of biological role, may be a crucial component of the cytoskeleton of highly motile cells, functioning both in the invagination of large pieces of plasma membrane, as well as in forming protrusions of the plasma membrane involved in cell locomotion. In mycobacteria-infected cells, its retention on the phagosomal membrane prevents fusion between phagosomes and lysosomes. This is Coronin-1A (Coro1a) from Mus musculus (Mouse).